Consider the following 502-residue polypeptide: Probable cytosol aminopeptidase (502 aa).

Residues lysine 265 and aspartate 270 each coordinate Mn(2+). Residue lysine 277 is part of the active site. Aspartate 288, aspartate 347, and glutamate 349 together coordinate Mn(2+). Arginine 351 is a catalytic residue.

It belongs to the peptidase M17 family. The cofactor is Mn(2+).

The protein localises to the cytoplasm. It catalyses the reaction Release of an N-terminal amino acid, Xaa-|-Yaa-, in which Xaa is preferably Leu, but may be other amino acids including Pro although not Arg or Lys, and Yaa may be Pro. Amino acid amides and methyl esters are also readily hydrolyzed, but rates on arylamides are exceedingly low.. The catalysed reaction is Release of an N-terminal amino acid, preferentially leucine, but not glutamic or aspartic acids.. Presumably involved in the processing and regular turnover of intracellular proteins. Catalyzes the removal of unsubstituted N-terminal amino acids from various peptides. The protein is Probable cytosol aminopeptidase of Rickettsia bellii (strain RML369-C).